Here is a 138-residue protein sequence, read N- to C-terminus: MAKSPPRSGSRRPGRIGSRKSGRRIPKGVIHVQASFNNTIVTVTDVRGRVISWSSAGTCGFRGTRRGTPFAAQTAAGNAIRAVADQGMQRAEVMIKGPGLGRDAALRAIRRSGILLNFVRDVTPMPHNGCRPPKKRRV.

The disordered stretch occupies residues 1–24; sequence MAKSPPRSGSRRPGRIGSRKSGRR. The segment covering 9-24 has biased composition (basic residues); that stretch reads GSRRPGRIGSRKSGRR.

It belongs to the universal ribosomal protein uS11 family. In terms of assembly, part of the 30S ribosomal subunit.

It is found in the plastid. It localises to the chloroplast. The polypeptide is Small ribosomal subunit protein uS11c (Citrus sinensis (Sweet orange)).